Here is a 77-residue protein sequence, read N- to C-terminus: Conotoxin VnMKLT1-012 (77 aa).

The first 22 residues, 1–22 (MKLTCMMIVAVLFLTAWTFVTA), serve as a signal peptide directing secretion. Positions 23–48 (DDSRNGLDYLFPKARHEMNPKASRDI) are excised as a propeptide. 3 disulfide bridges follow: cysteine 51/cysteine 68, cysteine 58/cysteine 72, and cysteine 67/cysteine 76.

The protein belongs to the conotoxin O1 superfamily. Expressed by the venom duct.

It is found in the secreted. This is Conotoxin VnMKLT1-012 from Conus ventricosus (Mediterranean cone).